The chain runs to 521 residues: uncharacterized protein (521 aa).

The tract at residues 1 to 25 is disordered; the sequence is MLQRSLGVNGRKLAMSARSAKRERK. 6 consecutive transmembrane segments (helical) span residues 68 to 88, 114 to 134, 160 to 180, 192 to 212, 290 to 310, and 399 to 419; these read GAVWVLPTFGVAIGLGSGAVL, VLIVVSATMITTIGIVFSLTV, VVLAIFACTFAYSTGGLHTVG, VAVTGSLALAFVSIAALIYFL, ALLVTFVGDYVTAGGLLGWCW, and LLFWLPYPSFATYLHVGCAQI.

It is found in the cell membrane. This is an uncharacterized protein from Mycobacterium tuberculosis (strain CDC 1551 / Oshkosh).